The primary structure comprises 143 residues: Peptide methionine sulfoxide reductase MsrB (143 aa).

The MsrB domain occupies 16–139 (DAELRRRLTP…NSAALNFESR (124 aa)). Residues Cys-55, Cys-58, Cys-104, and Cys-107 each coordinate Zn(2+). Cys-128 (nucleophile) is an active-site residue.

The protein belongs to the MsrB Met sulfoxide reductase family. The cofactor is Zn(2+).

It catalyses the reaction L-methionyl-[protein] + [thioredoxin]-disulfide + H2O = L-methionyl-(R)-S-oxide-[protein] + [thioredoxin]-dithiol. This Burkholderia multivorans (strain ATCC 17616 / 249) protein is Peptide methionine sulfoxide reductase MsrB.